We begin with the raw amino-acid sequence, 383 residues long: tRNA-specific 2-thiouridylase MnmA (383 aa).

ATP contacts are provided by residues 30–37 (GLSGGVDS) and leucine 56. The Nucleophile role is filled by cysteine 117. A disulfide bond links cysteine 117 and cysteine 216. Glycine 142 serves as a coordination point for ATP. The tract at residues 166 to 168 (KDQ) is interaction with tRNA. The active-site Cysteine persulfide intermediate is the cysteine 216. An interaction with tRNA region spans residues 321 to 322 (RY).

Belongs to the MnmA/TRMU family.

Its subcellular location is the cytoplasm. It catalyses the reaction S-sulfanyl-L-cysteinyl-[protein] + uridine(34) in tRNA + AH2 + ATP = 2-thiouridine(34) in tRNA + L-cysteinyl-[protein] + A + AMP + diphosphate + H(+). In terms of biological role, catalyzes the 2-thiolation of uridine at the wobble position (U34) of tRNA, leading to the formation of s(2)U34. This Synechococcus sp. (strain CC9605) protein is tRNA-specific 2-thiouridylase MnmA.